A 146-amino-acid polypeptide reads, in one-letter code: Small ribosomal subunit protein uS5 (146 aa).

An S5 DRBM domain is found at 8–71; sequence FSEVVVNIGR…DDAFKNIIKV (64 aa).

The protein belongs to the universal ribosomal protein uS5 family. In terms of assembly, part of the 30S ribosomal subunit. Contacts proteins S4 and S8.

Its function is as follows. With S4 and S12 plays an important role in translational accuracy. Located at the back of the 30S subunit body where it stabilizes the conformation of the head with respect to the body. The protein is Small ribosomal subunit protein uS5 of Helicobacter hepaticus (strain ATCC 51449 / 3B1).